The following is a 477-amino-acid chain: Delayed-rectifier potassium channel regulatory subunit KCNS2 (477 aa).

Over 1–184 the chain is Cytoplasmic; sequence MTRQSLWDLS…LALDNPGYSV (184 aa). A helical membrane pass occupies residues 185–206; it reads LSRVFSVLSILVVLGSIITMCL. At 207–225 the chain is on the extracellular side; that stretch reads NSLPDFQIPDSQGNPGEDP. Residues 226 to 248 form a helical membrane-spanning segment; it reads RFEIVEHFGIAWFTFELVARFAV. Residues 249 to 259 are Cytoplasmic-facing; the sequence is APDFLKFFKNA. Residues 260–280 traverse the membrane as a helical segment; that stretch reads LNLIDLMSIVPFYITLVVNLV. The Extracellular portion of the chain corresponds to 281 to 290; the sequence is VESSPTLANL. A helical; Voltage-sensor membrane pass occupies residues 291 to 311; that stretch reads GRVAQVLRLMRIFRILKLARH. Over 312–326 the chain is Cytoplasmic; that stretch reads STGLRSLGATLKYSY. Residues 327-348 form a helical membrane-spanning segment; the sequence is KEVGLLLLYLSVGISIFSVVAY. The Extracellular portion of the chain corresponds to 349 to 361; that stretch reads TIEKEENEGLATI. An intramembrane region (helical) is located at residues 362 to 373; it reads PACWWWATVSMT. Residues 374–379 carry the Selectivity filter motif; that stretch reads TVGYGD. Residues 374–381 lie within the membrane without spanning it; the sequence is TVGYGDVV. Over 382 to 388 the chain is Extracellular; that stretch reads PGTTAGK. The helical transmembrane segment at 389-417 threads the bilayer; it reads LTASACILAGILVVVLPITLIFNKFSHFY. Topologically, residues 418–477 are cytoplasmic; the sequence is RRQKQLESAMRSCDFGDGMKEVPSVNLRDYYAHKVKSLMASLTNMSRSSPSELSLDDSLH.

The protein belongs to the potassium channel family. S (TC 1.A.1.2) subfamily. Kv9.2/KCNS2 sub-subfamily. As to quaternary structure, heterotetramer with KCNB1 and KCNB2. Does not form homomultimers. Detected in brain, lung and in pulmonary arteries.

Its subcellular location is the cell membrane. Potassium channel regulatory subunit that modulate the delayed rectifier voltage-gated potassium channel activity of KCNB1 and KCNB2 by altering their kinetics, expression levels, and shifting the half-inactivation potential to more polarized values. While it does not form functional channels on its own, it can form functional heterotetrameric channels with KCNB1 and KCNB2. Each regulatory subunit has unique regulatory properties that can lead to extensive inhibition, significant changes in kinetics, and/or substantial shifts in the voltage dependencies of the inactivation process. In Rattus norvegicus (Rat), this protein is Delayed-rectifier potassium channel regulatory subunit KCNS2.